The chain runs to 151 residues: Deoxyuridine 5'-triphosphate nucleotidohydrolase (151 aa).

Substrate is bound by residues 70–72 (RSG), asparagine 83, 87–89 (LID), and methionine 97.

It belongs to the dUTPase family. The cofactor is Mg(2+).

The catalysed reaction is dUTP + H2O = dUMP + diphosphate + H(+). Its pathway is pyrimidine metabolism; dUMP biosynthesis; dUMP from dCTP (dUTP route): step 2/2. In terms of biological role, this enzyme is involved in nucleotide metabolism: it produces dUMP, the immediate precursor of thymidine nucleotides and it decreases the intracellular concentration of dUTP so that uracil cannot be incorporated into DNA. The sequence is that of Deoxyuridine 5'-triphosphate nucleotidohydrolase from Hamiltonella defensa subsp. Acyrthosiphon pisum (strain 5AT).